The chain runs to 527 residues: Catalase (527 aa).

Basic and acidic residues predominate over residues 1-22 (MADSRDPASDQMKQWKEQRAPQ). The disordered stretch occupies residues 1-34 (MADSRDPASDQMKQWKEQRAPQKPDVLTTGGGNP). Alanine 2 bears the N-acetylalanine mark. Serine 9 bears the Phosphoserine mark. At lysine 13 the chain carries N6-succinyllysine. Residues histidine 75 and asparagine 148 contribute to the active site. NADP(+)-binding residues include histidine 194, serine 201, arginine 203, and asparagine 213. Lysine 221 is subject to N6-succinyllysine. Lysine 233 is subject to N6-acetyllysine. 4 residues coordinate NADP(+): lysine 237, tryptophan 303, histidine 305, and lysine 306. Lysine 306 bears the N6-acetyllysine; alternate mark. Lysine 306 is modified (N6-succinyllysine; alternate). Tyrosine 358 lines the heme pocket. Phosphoserine is present on residues serine 417 and serine 434. Residues lysine 449 and lysine 480 each carry the N6-acetyllysine; alternate modification. N6-succinyllysine; alternate is present on residues lysine 449 and lysine 480. Phosphothreonine is present on threonine 511. Serine 517 carries the post-translational modification Phosphoserine. At lysine 522 the chain carries N6-succinyllysine. Positions 524–527 (KANL) match the Microbody targeting signal; atypical motif.

It belongs to the catalase family. In terms of assembly, homotetramer. Interacts (via microbody targeting signal) with PEX5, monomeric form interacts with PEX5, leading to its translocation into peroxisomes. It depends on heme as a cofactor. The cofactor is NADP(+). In terms of tissue distribution, expressed in renal proximal tubules (at protein level).

The protein resides in the peroxisome matrix. The enzyme catalyses 2 H2O2 = O2 + 2 H2O. Functionally, catalyzes the degradation of hydrogen peroxide (H(2)O(2)) generated by peroxisomal oxidases to water and oxygen, thereby protecting cells from the toxic effects of hydrogen peroxide. Promotes growth of cells including T-cells, B-cells, myeloid leukemia cells, melanoma cells, mastocytoma cells and normal and transformed fibroblast cells. This Rattus norvegicus (Rat) protein is Catalase (Cat).